The chain runs to 114 residues: Fluoride-specific ion channel FluC 1 (114 aa).

The next 3 helical transmembrane spans lie at alanine 23–phenylalanine 43, leucine 52–valine 72, and phenylalanine 84–glycine 104. Na(+) contacts are provided by glycine 62 and threonine 65.

This sequence belongs to the fluoride channel Fluc/FEX (TC 1.A.43) family.

The protein localises to the cell membrane. It catalyses the reaction fluoride(in) = fluoride(out). With respect to regulation, na(+) is not transported, but it plays an essential structural role and its presence is essential for fluoride channel function. Fluoride-specific ion channel. Important for reducing fluoride concentration in the cell, thus reducing its toxicity. This chain is Fluoride-specific ion channel FluC 1, found in Desulfitobacterium hafniense (strain Y51).